The following is a 309-amino-acid chain: Serine/threonine-protein phosphatase 2A catalytic subunit alpha isoform (309 aa).

Residues D57, H59, D85, and N117 each coordinate Mn(2+). Zn(2+) is bound by residues D57, H59, and D85. Residues D85 and N117 each contribute to the Fe(3+) site. The active-site Proton donor is the H118. Residues H167 and H241 each contribute to the Mn(2+) site. Fe(3+)-binding residues include H167 and H241. Y307 is modified (phosphotyrosine). L309 is subject to Leucine methyl ester.

Belongs to the PPP phosphatase family. PP-1 subfamily. In terms of assembly, PP2A consists of a common heterodimeric core enzyme composed of PPP2CA, a 36 kDa catalytic subunit (subunit C), and PPP2R1A, a 65 kDa constant regulatory subunit (PR65 or subunit A), that associates with a variety of regulatory subunits. Proteins that associate with the core dimer include three families of regulatory subunits B (the R2/B/PR55/B55, R3/B''/PR72/PR130/PR59 and R5/B'/B56 families), the 48 kDa variable regulatory subunit, viral proteins, and cell signaling molecules. Interacts with the PP2A A subunit PPP2R1A. Interacts with the regulatory subunit PPP2R2A. Interacts (via C-terminus) with PTPA. Interacts with NXN; the interaction is direct. Interacts with KCTD20. Interacts with BTBD10. Interacts with SGO1 and SGO2. Interacts with RAF1. Interaction with IGBP1 protects unassembled PPP2CA from degradative ubiquitination. Interacts with GSK3B (via C2 domain). Interacts with MFHAS1; retains PPP2CA into the cytoplasm and excludes it from the nucleus. Interacts with PABIR1/FAM122A. Interacts with ADCY8; interaction is phosphatase activity-dependent; antagonizes interaction between ADCY8 and calmodulin. Interacts with CRTC3 (when phosphorylated at 'Ser-391'). Interacts with SPRY2; the interaction is inhibited by TESK1 interaction with SPRY2, possibly by vesicular sequestration of SPRY2. Interacts with TRAF3IP3. Interacts with AMBRA1 (via PxP motifs); enhancing interaction between PPP2CA and MYC or FOXO3. Forms a complex with AMBRA1 and BECN1; AMBRA1 and BECN1 components of the complex regulate MYC stability via different pathways. Part of the core of STRIPAK complexes composed of PP2A catalytic and scaffolding subunits, the striatins (PP2A regulatory subunits), the striatin-associated proteins MOB4, STRIP1 and STRIP2, PDCD10 and members of the STE20 kinases, such as STK24 and STK26. Phosphatase component of the Integrator-PP2A (INTAC) complex, composed of the Integrator core complex and protein phosphatase 2A subunits PPP2CA and PPP2R1A. Requires Mn(2+) as cofactor. Fe(3+) serves as cofactor. Zn(2+) is required as a cofactor. In terms of processing, reversibly methyl esterified on Leu-309 by leucine carboxyl methyltransferase 1 (LCMT1) and protein phosphatase methylesterase 1 (PPME1). Carboxyl methylation influences the affinity of the catalytic subunit for the different regulatory subunits, thereby modulating the PP2A holoenzyme's substrate specificity, enzyme activity and cellular localization. Phosphorylation of either threonine (by autophosphorylation-activated protein kinase) or tyrosine results in inactivation of the phosphatase. Auto-dephosphorylation has been suggested as a mechanism for reactivation. Post-translationally, polyubiquitinated, leading to its degradation by the proteasome.

It is found in the cytoplasm. The protein localises to the nucleus. It localises to the chromosome. The protein resides in the centromere. Its subcellular location is the cytoskeleton. It is found in the spindle pole. The enzyme catalyses O-phospho-L-seryl-[protein] + H2O = L-seryl-[protein] + phosphate. It carries out the reaction O-phospho-L-threonyl-[protein] + H2O = L-threonyl-[protein] + phosphate. Its activity is regulated as follows. Inhibited by the interaction between PPP2R2A and ARPP19; this inhibition is enhanced when ARPP19 is phosphorylated. Inhibited by the interaction between PPP2R2A and PABIR1/FAM122A. Catalytic subunit of protein phosphatase 2A (PP2A), a serine/threonine phosphatase involved in the regulation of a wide variety of enzymes, signal transduction pathways, and cellular events. PP2A is the major phosphatase for microtubule-associated proteins (MAPs). PP2A can modulate the activity of phosphorylase B kinase casein kinase 2, mitogen-stimulated S6 kinase, and MAP-2 kinase. Cooperates with SGO2 to protect centromeric cohesin from separase-mediated cleavage in oocytes specifically during meiosis I. Can dephosphorylate various proteins, such as SV40 large T antigen, AXIN1, p53/TP53, PIM3, WEE1. Activates RAF1 by dephosphorylating it at 'Ser-259'. Mediates dephosphorylation of WEE1, preventing its ubiquitin-mediated proteolysis, increasing WEE1 protein levels, and promoting the G2/M checkpoint. Mediates dephosphorylation of MYC; promoting its ubiquitin-mediated proteolysis: interaction with AMBRA1 enhances interaction between PPP2CA and MYC. Mediates dephosphorylation of FOXO3; promoting its stabilization: interaction with AMBRA1 enhances interaction between PPP2CA and FOXO3. Catalyzes dephosphorylation of the pyrin domain of NLRP3, promoting assembly of the NLRP3 inflammasome. Together with RACK1 adapter, mediates dephosphorylation of AKT1 at 'Ser-473', preventing AKT1 activation and AKT-mTOR signaling pathway. Dephosphorylation of AKT1 is essential for regulatory T-cells (Treg) homeostasis and stability. Catalyzes dephosphorylation of PIM3, promotinh PIM3 ubiquitination and proteasomal degradation. Part of the striatin-interacting phosphatase and kinase (STRIPAK) complexes. STRIPAK complexes have critical roles in protein (de)phosphorylation and are regulators of multiple signaling pathways including Hippo, MAPK, nuclear receptor and cytoskeleton remodeling. Different types of STRIPAK complexes are involved in a variety of biological processes such as cell growth, differentiation, apoptosis, metabolism and immune regulation. Key mediator of a quality checkpoint during transcription elongation as part of the Integrator-PP2A (INTAC) complex. The INTAC complex drives premature transcription termination of transcripts that are unfavorably configured for transcriptional elongation: within the INTAC complex, PPP2CA catalyzes dephosphorylation of the C-terminal domain (CTD) of Pol II subunit POLR2A/RPB1 and SUPT5H/SPT5, thereby preventing transcriptional elongation. In Homo sapiens (Human), this protein is Serine/threonine-protein phosphatase 2A catalytic subunit alpha isoform (PPP2CA).